A 503-amino-acid chain; its full sequence is MQLSMSFLIGFGTLVLALSARTFDLQGLSCNTDSTPGLIDLEIRRLCHTPTENVISCEVRYLNHTTINLPAVHTSCLKYHCKTYWGFFGSYSADRIINRYTGTVKGCLNNSAPEDPFECNWFYCCSAITTEICRCSITNVTVAVQTFPPFMYCSFADCSTVSQQELESGKAMLSDGSTLTYTPYILQSEVVNKTLNGTILCNSSSKIVSFDEFRRSYSLANGSYQSSSINVTCVNYTSSCRPRLKRRRRDTQQIEYLVHKLRPTLKDAWEDCEILQSLLLGVFGTGIASASQFLRGWLNHPDIIGYIVNGVGVVWQCHRVNVTFMAWNESTYYPPVDYNGRKYFLNDEGRLQTNTPEARPGLKRVMWFGRYFLGTVGSGVKPRRIRYNKTSHDYHLEEFEASLNMTPQTSIASGHETDPINHAYGTQADLLPYTRSSNITSTDTGSGWVHIGLPSFAFLNPLGWLRDLLAWAAWLGGVLYLISLCVSLPASFARRRRLGRWQE.

The signal sequence occupies residues 1–22; it reads MQLSMSFLIGFGTLVLALSART. At 23-467 the chain is on the extracellular side; the sequence is FDLQGLSCNT…FLNPLGWLRD (445 aa). Asn63, Asn109, Asn139, Asn192, Asn196, Asn202, Asn221, Asn230, and Asn235 each carry an N-linked (GlcNAc...) asparagine; by host glycan. The fusion peptide stretch occupies residues 274–315; it reads ILQSLLLGVFGTGIASASQFLRGWLNHPDIIGYIVNGVGVVW. Asn321, Asn328, Asn388, and Asn438 each carry an N-linked (GlcNAc...) asparagine; by host glycan. A helical membrane pass occupies residues 468 to 488; it reads LLAWAAWLGGVLYLISLCVSL. Residues 489-503 are Cytoplasmic-facing; it reads PASFARRRRLGRWQE.

Glycosated; Stabilizes it. In terms of processing, a portion of p57 is cleaved into p27 and p29. p27 and p29 are called gp43 when glycosylated, as they seem to have the same molecular weight.

It is found in the host endoplasmic reticulum membrane. Its subcellular location is the virion. The protein localises to the host cell membrane. Functionally, unprocessed envelope protein p57 is thought to be involved in attachment of the virus to its cell surface receptor. This attachment induces virion internalization predominantly through clathrin-dependent endocytosis. Envelope protein p27 and p29 presumably linked by disulfide bond are the viral type II fusion protein, involved in pH-dependent fusion within early endosomes after internalization of the virion by endocytosis. This Borna disease virus 1 (BoDV-1) protein is Envelope glycoprotein p57 (G).